The sequence spans 555 residues: GPI-anchor transamidase component PIGS (555 aa).

Residues 2–18 (AATGAAATDLEVVRGKR) lie on the Cytoplasmic side of the membrane. A cardiolipin is bound by residues arginine 15 and arginine 18. Residues 19-39 (AALFFATVVIVLGLPLWWKTT) traverse the membrane as a helical segment. At 40 to 517 (ETYRAPLPYS…LHLLYFPDDQ (478 aa)) the chain is on the lumenal side. Residues asparagine 267 and asparagine 370 are each glycosylated (N-linked (GlcNAc...) asparagine). Residues 518-532 (KFAIYIPLFLPMAVP) traverse the membrane as a helical segment. Topologically, residues 533-555 (ILLSLFKIFLETRKSWKKPEKTD) are cytoplasmic.

It belongs to the PIGS family. As to quaternary structure, heteropentamer. Part of the GPI-anchor transamidase complex, consisting of PIGK, PIGT, PIGS, PIGU and GAA1.

It localises to the endoplasmic reticulum membrane. It participates in glycolipid biosynthesis; glycosylphosphatidylinositol-anchor biosynthesis. Its function is as follows. Component of the glycosylphosphatidylinositol-anchor (GPI-anchor) transamidase (GPI-T) complex that catalyzes the formation of the linkage between a proprotein and a GPI-anchor and participates in GPI anchored protein biosynthesis. The protein is GPI-anchor transamidase component PIGS of Bos taurus (Bovine).